A 193-amino-acid polypeptide reads, in one-letter code: dTTP/UTP pyrophosphatase (193 aa).

D75 acts as the Proton acceptor in catalysis.

Belongs to the Maf family. YhdE subfamily. The cofactor is a divalent metal cation.

The protein localises to the cytoplasm. The enzyme catalyses dTTP + H2O = dTMP + diphosphate + H(+). The catalysed reaction is UTP + H2O = UMP + diphosphate + H(+). Its function is as follows. Nucleoside triphosphate pyrophosphatase that hydrolyzes dTTP and UTP. May have a dual role in cell division arrest and in preventing the incorporation of modified nucleotides into cellular nucleic acids. In Chlorobium phaeovibrioides (strain DSM 265 / 1930) (Prosthecochloris vibrioformis (strain DSM 265)), this protein is dTTP/UTP pyrophosphatase.